The chain runs to 577 residues: Aspartate--tRNA ligase (577 aa).

Glu169 serves as a coordination point for L-aspartate. The interval Gln193–Lys196 is aspartate. Arg215 contributes to the L-aspartate binding site. ATP-binding positions include Arg215 to Glu217 and Gln224. His440 is an L-aspartate binding site. Glu474 is a binding site for ATP. Arg481 is a binding site for L-aspartate. Gly526 to Arg529 serves as a coordination point for ATP.

It belongs to the class-II aminoacyl-tRNA synthetase family. Type 1 subfamily. As to quaternary structure, homodimer.

It localises to the cytoplasm. It catalyses the reaction tRNA(Asp) + L-aspartate + ATP = L-aspartyl-tRNA(Asp) + AMP + diphosphate. Catalyzes the attachment of L-aspartate to tRNA(Asp) in a two-step reaction: L-aspartate is first activated by ATP to form Asp-AMP and then transferred to the acceptor end of tRNA(Asp). The protein is Aspartate--tRNA ligase of Mesoplasma florum (strain ATCC 33453 / NBRC 100688 / NCTC 11704 / L1) (Acholeplasma florum).